A 312-amino-acid chain; its full sequence is Malate dehydrogenase (312 aa).

NAD(+) contacts are provided by residues 12–17 and Asp36; that span reads GAGFTG. Substrate-binding residues include Arg87 and Arg93. NAD(+) is bound by residues Asn100 and 123-125; that span reads LTN. Asn125 is a binding site for substrate. Ser149 is modified (phosphoserine). Arg156 is a binding site for substrate. Residue His180 is the Proton acceptor of the active site.

It belongs to the LDH/MDH superfamily. MDH type 3 family.

The enzyme catalyses (S)-malate + NAD(+) = oxaloacetate + NADH + H(+). Its function is as follows. Catalyzes the reversible oxidation of malate to oxaloacetate. This is Malate dehydrogenase from Geobacillus thermodenitrificans (strain NG80-2).